The chain runs to 591 residues: Aspartate--tRNA(Asp/Asn) ligase (591 aa).

Glu174 contacts L-aspartate. Residues 198–201 (QLFK) form an aspartate region. Position 220 (Arg220) interacts with L-aspartate. ATP-binding positions include 220–222 (RDE) and Gln229. Residue His450 participates in L-aspartate binding. Glu483 is an ATP binding site. Arg490 lines the L-aspartate pocket. An ATP-binding site is contributed by 535–538 (GLDR).

It belongs to the class-II aminoacyl-tRNA synthetase family. Type 1 subfamily. As to quaternary structure, homodimer.

Its subcellular location is the cytoplasm. It carries out the reaction tRNA(Asx) + L-aspartate + ATP = L-aspartyl-tRNA(Asx) + AMP + diphosphate. Functionally, aspartyl-tRNA synthetase with relaxed tRNA specificity since it is able to aspartylate not only its cognate tRNA(Asp) but also tRNA(Asn). Reaction proceeds in two steps: L-aspartate is first activated by ATP to form Asp-AMP and then transferred to the acceptor end of tRNA(Asp/Asn). The chain is Aspartate--tRNA(Asp/Asn) ligase from Pseudomonas syringae pv. tomato (strain ATCC BAA-871 / DC3000).